The chain runs to 199 residues: MRYYAEPVGRLIEELSKLPGVGPKTAQRLAFHLLHVPRNEAVALAKAIVEAHDKTLYCSVCTNLTDRDPCRICSDANRDRAVICVVEEPRDVVAVEKTREYRGHYHVLHGALSPIEGVGPEQLRISQLMARLADPELKEVIVATNPTVEGEATAAYLARLIKPMGVKVTRIAHGLPVGGDLEYADQVTLLRAMEGRREL.

The C4-type zinc finger occupies 58 to 73 (CSVCTNLTDRDPCRIC). Positions 81–176 (AVICVVEEPR…KVTRIAHGLP (96 aa)) constitute a Toprim domain.

It belongs to the RecR family.

Its function is as follows. May play a role in DNA repair. It seems to be involved in an RecBC-independent recombinational process of DNA repair. It may act with RecF and RecO. This Heliobacterium modesticaldum (strain ATCC 51547 / Ice1) protein is Recombination protein RecR.